A 770-amino-acid polypeptide reads, in one-letter code: Serine/threonine-protein kinase PLK4 (770 aa).

In terms of domain architecture, Protein kinase spans 14 to 267; it reads YEVQHLLGKG…LEHVLRHPFL (254 aa). ATP contacts are provided by residues 20-28 and K43; that span reads LGKGGFASV. D138 functions as the Proton acceptor in the catalytic mechanism. In terms of domain architecture, Cryptic POLO box 1 (CPB1) spans 383–500; it reads EERISVPPLN…DRFVGLVKSK (118 aa). Positions 501–604 constitute a Cryptic POLO box 2 (CPB2) domain; it reads TPKVTYFSAL…GRRPVTEVQP (104 aa). Positions 662–741 constitute a POLO box domain; that stretch reads PIKRINLPDI…LPHIQLKLKT (80 aa).

The protein belongs to the protein kinase superfamily. Ser/Thr protein kinase family. CDC5/Polo subfamily. In terms of assembly, homodimer. Ubiquitinated by the SCF(Slimb) ubiquitin ligase complex; leading to its degradation by the proteasome during interphase and regulating centriole number and ensuring the block to centriole reduplication.

It is found in the cytoplasm. Its subcellular location is the cytoskeleton. It localises to the microtubule organizing center. The protein localises to the centrosome. The protein resides in the centriole. The catalysed reaction is L-seryl-[protein] + ATP = O-phospho-L-seryl-[protein] + ADP + H(+). It carries out the reaction L-threonyl-[protein] + ATP = O-phospho-L-threonyl-[protein] + ADP + H(+). Functionally, serine/threonine-protein kinase that plays a central role in centriole duplication. Able to trigger procentriole formation on the surface of the mother centriole cylinder, using mother centriole as a platform, leading to the recruitment of centriole biogenesis proteins such as sas-6. When overexpressed, it is able to induce centrosome amplification through the simultaneous generation of multiple procentrioles adjoining each parental centriole during S phase. Centrosome amplification following overexpression can initiate tumorigenesis, highlighting the importance of centrosome regulation in cancers. The sequence is that of Serine/threonine-protein kinase PLK4 (SAK) from Drosophila ananassae (Fruit fly).